The following is a 228-amino-acid chain: 2,3-bisphosphoglycerate-dependent phosphoglycerate mutase (228 aa).

Residues arginine 8 to asparagine 15, threonine 21 to glycine 22, arginine 60, glutamate 87 to tyrosine 90, lysine 98, arginine 114 to arginine 115, and glycine 180 to asparagine 181 contribute to the substrate site. The active-site Tele-phosphohistidine intermediate is histidine 9. Glutamate 87 acts as the Proton donor/acceptor in catalysis.

It belongs to the phosphoglycerate mutase family. BPG-dependent PGAM subfamily. In terms of assembly, homodimer.

The enzyme catalyses (2R)-2-phosphoglycerate = (2R)-3-phosphoglycerate. It functions in the pathway carbohydrate degradation; glycolysis; pyruvate from D-glyceraldehyde 3-phosphate: step 3/5. Its function is as follows. Catalyzes the interconversion of 2-phosphoglycerate and 3-phosphoglycerate. This is 2,3-bisphosphoglycerate-dependent phosphoglycerate mutase from Zymomonas mobilis subsp. mobilis (strain ATCC 31821 / ZM4 / CP4).